Consider the following 505-residue polypeptide: Chromatin assembly factor 1 subunit FAS2 homolog (505 aa).

WD repeat units follow at residues 11-50 (HEQQ…SDKK), 62-101 (SHSS…DGEA), 110-149 (FHHK…VQQK), 152-191 (GHLH…KSKN), 223-268 (FHDE…SRRD), 278-333 (GASK…PILI), and 337-378 (LHYA…LPYN). The segment at 479–505 (VTAPPVSTKNSASSKPTKKRITPIAIN) is disordered.

This sequence belongs to the WD repeat HIR1 family. As to quaternary structure, component of the chromatin assembly factor 1 (CAF-1) complex, composed of FSM (FAS1), FAS2 and MSI1.

It localises to the nucleus. Its function is as follows. Component of the chromatin assembly factor complex (CAF-1) involved in chromatin assembly following DNA replication and DNA repair. Required for several aspects of development, including apical meristem maintenance by regulating the durations of the S- and G2-phases of the cell cycle through its chromatin assembly activity. This is Chromatin assembly factor 1 subunit FAS2 homolog (FAS2) from Oryza sativa subsp. japonica (Rice).